The following is a 261-amino-acid chain: Methionine aminopeptidase (261 aa).

Residue histidine 78 participates in substrate binding. Aspartate 96, aspartate 107, and histidine 170 together coordinate a divalent metal cation. Residue histidine 177 participates in substrate binding. The a divalent metal cation site is built by glutamate 202 and glutamate 233.

It belongs to the peptidase M24A family. Methionine aminopeptidase type 1 subfamily. As to quaternary structure, monomer. Co(2+) serves as cofactor. The cofactor is Zn(2+). It depends on Mn(2+) as a cofactor. Requires Fe(2+) as cofactor.

The enzyme catalyses Release of N-terminal amino acids, preferentially methionine, from peptides and arylamides.. Its function is as follows. Removes the N-terminal methionine from nascent proteins. The N-terminal methionine is often cleaved when the second residue in the primary sequence is small and uncharged (Met-Ala-, Cys, Gly, Pro, Ser, Thr, or Val). Requires deformylation of the N(alpha)-formylated initiator methionine before it can be hydrolyzed. In Buchnera aphidicola subsp. Schizaphis graminum (strain Sg), this protein is Methionine aminopeptidase.